The following is a 302-amino-acid chain: Glutamate/aspartate import solute-binding protein (302 aa).

A signal peptide spans 1-22; sequence MQLRKPATAILALALSAGLAQA.

It belongs to the bacterial solute-binding protein 3 family. In terms of assembly, the complex is composed of two ATP-binding proteins (GltL), two transmembrane proteins (GltJ and GltK) and a solute-binding protein (GltI).

Its subcellular location is the periplasm. Its function is as follows. Part of the ABC transporter complex GltIJKL involved in glutamate and aspartate uptake. Binds to both glutamate and aspartate. The sequence is that of Glutamate/aspartate import solute-binding protein (gltI) from Escherichia coli (strain K12).